Reading from the N-terminus, the 236-residue chain is V-set and transmembrane domain-containing protein 1 (236 aa).

The first 16 residues, 1–16, serve as a signal peptide directing secretion; the sequence is MTAEFLSLLCLGLCLG. The Extracellular portion of the chain corresponds to 17–135; the sequence is YEDEKKNEKP…APSMKTDTRT (119 aa). The 88-residue stretch at 27 to 114 folds into the Ig-like V-type domain; that stretch reads PKPSLHAWPS…EWSESSEHLQ (88 aa). N44 and N55 each carry an N-linked (GlcNAc...) asparagine glycan. Residues C49 and C96 are joined by a disulfide bond. The helical transmembrane segment at 136–156 threads the bilayer; that stretch reads IFVAIFSCISILLLFLSVFII. Over 157 to 236 the chain is Cytoplasmic; that stretch reads YRCSQHSSSS…GSHEYAALKV (80 aa). A disordered region spans residues 166–200; it reads SEESTKRTSHSKLPEQEAAEADLSNMERVSLSTAD. 2 consecutive short sequence motifs (ITIM motif) follow at residues 204-209 and 229-234; these read VTYAEL and HEYAAL. A disordered region spans residues 215 to 236; that stretch reads SEAASDTTQEPPGSHEYAALKV.

Isoform 2 is N-glycosylated. In terms of tissue distribution, expressed on myeloid (neutrophils, eosinophils and monocytes) but not on lymphoid cells.

It localises to the membrane. Its subcellular location is the secreted. Its function is as follows. Behaves as a cytokine, promoting IL17A secretion by CD4+ T-cells, and differentiation and activation of IL17 producing helper T-cells (TH17). Functionally, inhibitory immune receptor involved in the regulation of phagocytes. The sequence is that of V-set and transmembrane domain-containing protein 1 (VSTM1) from Homo sapiens (Human).